The primary structure comprises 225 residues: ATP synthase subunit a (225 aa).

5 helical membrane-spanning segments follow: residues 16–36 (LFVY…VAKL), 79–99 (LVAT…IPGF), 105–125 (SLNL…FEGI), 176–196 (LFLL…AYAL), and 202–222 (VLQT…AVAI).

Belongs to the ATPase A chain family. In terms of assembly, F-type ATPases have 2 components, CF(1) - the catalytic core - and CF(0) - the membrane proton channel. CF(1) has five subunits: alpha(3), beta(3), gamma(1), delta(1), epsilon(1). CF(0) has three main subunits: a(1), b(2) and c(9-12). The alpha and beta chains form an alternating ring which encloses part of the gamma chain. CF(1) is attached to CF(0) by a central stalk formed by the gamma and epsilon chains, while a peripheral stalk is formed by the delta and b chains.

It is found in the cell inner membrane. Key component of the proton channel; it plays a direct role in the translocation of protons across the membrane. The chain is ATP synthase subunit a from Campylobacter curvus (strain 525.92).